The primary structure comprises 346 residues: Lipooligosaccharide heptosyltransferase 2 (346 aa).

It belongs to the glycosyltransferase 9 family.

The enzyme catalyses an L-alpha-D-Hep-(1-&gt;5)-[alpha-Kdo-(2-&gt;4)]-alpha-Kdo-(2-&gt;6)-lipid A + ADP-L-glycero-beta-D-manno-heptose = an L-alpha-D-Hep-(1-&gt;3)-L-alpha-D-Hep-(1-&gt;5)-[alpha-Kdo-(2-&gt;4)]-alpha-Kdo-(2-&gt;6)-lipid A + ADP + H(+). It participates in bacterial outer membrane biogenesis; LOS core biosynthesis. Its function is as follows. Glycosyltransferase involved in the biosynthesis of the core oligosaccharide region of lipooligosaccharide (LOS). Catalyzes the addition of a heptose unit to the heptosyl-Kdo2-lipid A module. The sequence is that of Lipooligosaccharide heptosyltransferase 2 (waaF) from Haemophilus influenzae (strain ATCC 51907 / DSM 11121 / KW20 / Rd).